A 473-amino-acid chain; its full sequence is Maltose fermentation regulatory protein MAL63 (473 aa).

The zn(2)-C6 fungal-type DNA-binding region spans 8–34 (CDCCRVRRVKCDRNKPCNRCIQRNLNC). The Nuclear localization signal signature appears at 41–49 (KKRGPKSIR).

Belongs to the MAL13 family.

It is found in the nucleus. In terms of biological role, regulates the coordinate transcription of structural MAL6S (maltase) and MAL6T (maltose permease) genes. The protein is Maltose fermentation regulatory protein MAL63 (MAL63) of Saccharomyces cerevisiae (Baker's yeast).